Here is a 90-residue protein sequence, read N- to C-terminus: uncharacterized protein (90 aa).

Its subcellular location is the mitochondrion. This is an uncharacterized protein from Ascobolus immersus.